Here is an 805-residue protein sequence, read N- to C-terminus: MAERVLTRVHSLRERVDATLAAHRNEILLFLSRIESHGKGILKPHELLAEFDAIRQDDKNKLNEHAFEELLKSTQEAIVLPPWVALAIRLRPGVWEYIRVNVNALVVEELSVPEYLQFKEELVDGASNGNFVLELDFEPFTASFPKPTLTKSIGNGVEFLNRHLSAKMFHDKESMTPLLEFLRAHHYKGKTMMLNDRIQNSNTLQNVLRKAEEYLIMLPPETPYFEFEHKFQEIGLEKGWGDTAERVLEMVCMLLDLLEAPDSCTLEKFLGRIPMVFNVVILSPHGYFAQENVLGYPDTGGQVVYILDQVPALEREMLKRIKEQGLDIIPRILIVTRLLPDAVGTTCGQRIEKVYGAEHSHILRVPFRTEKGIVRKWISRFEVWPYMETFIEDVAKEISAELQAKPDLIIGNYSEGNLAASLLAHKLGVTQCTIAHALEKTKYPDSDIYWKKFDEKYHFSSQFTADLIAMNHTDFIITSTFQEIAGSKDTVGQYESHMAFTMPGLYRVVHGINVFDPKFNIVSPGADINLYFSYSETEKRLTAFHPEIDELLYSDVENDEHLCVLKDRTKPILFTMARLDRVKNLTGLVEWYAKNPRLRGLVNLVVVGGDRRKESKDLEEQAEMKKMYELIETHNLNGQFRWISSQMNRVRNGELYRYIADTKGAFVQPAFYEAFGLTVVEAMTCGLPTFATNHGGPAEIIVHGKSGFHIDPYHGEQAADLLADFFEKCKKDPSHWETISMGGLKRIEEKYTWQIYSESLLTLAAVYGFWKHVSKLDRLEIRRYLEMFYALKYRKMAEAVPLAAE.

The segment at 275 to 752 (MVFNVVILSP…GLKRIEEKYT (478 aa)) is GT-B glycosyltransferase.

The protein belongs to the glycosyltransferase 1 family. Plant sucrose synthase subfamily. As to expression, expression is at least 10-fold higher in tubers compared to photosynthetically active tissues.

The enzyme catalyses an NDP-alpha-D-glucose + D-fructose = a ribonucleoside 5'-diphosphate + sucrose + H(+). Functionally, sucrose-cleaving enzyme that provides UDP-glucose and fructose for various metabolic pathways. The sequence is that of Sucrose synthase from Solanum tuberosum (Potato).